The primary structure comprises 90 residues: Small cysteine-rich outer membrane protein OmcA (90 aa).

The first 19 residues, 1-19, serve as a signal peptide directing secretion; sequence MKKAVLIAAMFCGVVSLSS. Residue C20 is the site of N-palmitoyl cysteine attachment. The S-diacylglycerol cysteine moiety is linked to residue C20. Residues 69–90 form a disordered region; the sequence is TECNSQSPQVKGCTSPDGRCKQ.

In terms of assembly, part of a disulfide cross-linked outer membrane complex (COMC) composed of the major outer membrane porin (MOMP), the small cysteine-rich protein (OmcA) and the large cysteine-rich periplasmic protein (OmcB).

Its subcellular location is the cell outer membrane. In terms of biological role, in elementary bodies (EBs, the infectious stage, which is able to survive outside the host cell) provides the structural integrity of the outer envelope through disulfide cross-links with the large cysteine-rich periplasmic protein and the major outer membrane porin. It has been described in publications as the Sarkosyl-insoluble COMC (Chlamydia outer membrane complex), and serves as the functional equivalent of peptidoglycan. This chain is Small cysteine-rich outer membrane protein OmcA (omcA), found in Chlamydia pneumoniae (Chlamydophila pneumoniae).